Consider the following 872-residue polypeptide: G-type lectin S-receptor-like serine/threonine-protein kinase At5g24080 (872 aa).

Residues 1–25 (MSSFHFYFPSVGLFSFFCFFLVSLA) form the signal peptide. Residues 26–472 (TEPHIGLGSK…SRKSHGLRQK (447 aa)) lie on the Extracellular side of the membrane. In terms of domain architecture, Bulb-type lectin spans 30-149 (IGLGSKLKAS…EVTAGPTIWQ (120 aa)). Asparagine 49, asparagine 117, asparagine 208, asparagine 219, asparagine 261, and asparagine 294 each carry an N-linked (GlcNAc...) asparagine glycan. An EGF-like; atypical domain is found at 306-344 (VSNPCDIAGICGNGVCNLDRTKKNADCLCLPGSVKLPDQ). Disulfide bonds link cysteine 310/cysteine 321 and cysteine 316/cysteine 332. Asparagine 353, asparagine 367, and asparagine 390 each carry an N-linked (GlcNAc...) asparagine glycan. The PAN domain maps to 360–447 (CESNINRNGS…PGSTLFVKTR (88 aa)). Intrachain disulfides connect cysteine 400–cysteine 424 and cysteine 404–cysteine 410. Residues asparagine 449 and asparagine 459 are each glycosylated (N-linked (GlcNAc...) asparagine). A helical transmembrane segment spans residues 473 to 493 (VLVIPIVVGMLVLVALLGMLL). The Cytoplasmic segment spans residues 494 to 872 (YYNLDRKRTL…TCSYSSMSPR (379 aa)). Threonine 521 is subject to Phosphothreonine. A Protein kinase domain is found at 530–810 (NNFSQLLGSG…LEGTSDEINL (281 aa)). ATP is bound by residues 536-544 (LGSGGFGTV) and lysine 558. Tyrosine 603 carries the post-translational modification Phosphotyrosine. A caM-binding region spans residues 619–637 (EQTANLLDWRTRFEIAVAT). Residue aspartate 656 is the Proton acceptor of the active site. 2 positions are modified to phosphothreonine: threonine 690 and threonine 695.

This sequence belongs to the protein kinase superfamily. Ser/Thr protein kinase family.

It localises to the cell membrane. It carries out the reaction L-seryl-[protein] + ATP = O-phospho-L-seryl-[protein] + ADP + H(+). It catalyses the reaction L-threonyl-[protein] + ATP = O-phospho-L-threonyl-[protein] + ADP + H(+). The chain is G-type lectin S-receptor-like serine/threonine-protein kinase At5g24080 from Arabidopsis thaliana (Mouse-ear cress).